A 186-amino-acid chain; its full sequence is Inosine/xanthosine triphosphatase (186 aa).

Residue glutamine 75 participates in Mg(2+) binding.

This sequence belongs to the YjjX NTPase family. In terms of assembly, homodimer. Requires Mg(2+) as cofactor. The cofactor is Mn(2+).

The enzyme catalyses XTP + H2O = XDP + phosphate + H(+). It catalyses the reaction ITP + H2O = IDP + phosphate + H(+). Its function is as follows. Phosphatase that hydrolyzes non-canonical purine nucleotides such as XTP and ITP to their respective diphosphate derivatives. Probably excludes non-canonical purines from DNA/RNA precursor pool, thus preventing their incorporation into DNA/RNA and avoiding chromosomal lesions. This is Inosine/xanthosine triphosphatase from Shewanella baltica (strain OS185).